The primary structure comprises 123 residues: Large ribosomal subunit protein mL52 (123 aa).

A mitochondrion-targeting transit peptide spans 1 to 23 (MAALGTVLFTGVRRLHCSVAAWA). Residues 99 to 109 (QEEQRKQENAL) show a composition bias toward basic and acidic residues. Residues 99 to 123 (QEEQRKQENALKPKGASLKSPLPSQ) form a disordered region.

Belongs to the mitochondrion-specific ribosomal protein mL52 family. As to quaternary structure, component of the mitochondrial large ribosomal subunit (mt-LSU). Mature mammalian 55S mitochondrial ribosomes consist of a small (28S) and a large (39S) subunit. The 28S small subunit contains a 12S ribosomal RNA (12S mt-rRNA) and 30 different proteins. The 39S large subunit contains a 16S rRNA (16S mt-rRNA), a copy of mitochondrial valine transfer RNA (mt-tRNA(Val)), which plays an integral structural role, and 52 different proteins. mL52 connects the central protuberance to the body of the ribosome.

The protein localises to the mitochondrion. This chain is Large ribosomal subunit protein mL52 (MRPL52), found in Homo sapiens (Human).